The sequence spans 275 residues: NH(3)-dependent NAD(+) synthetase (275 aa).

An ATP-binding site is contributed by 46 to 53; that stretch reads GISGGQDS. Asp-52 is a Mg(2+) binding site. Residue Arg-140 coordinates deamido-NAD(+). Position 160 (Thr-160) interacts with ATP. Mg(2+) is bound at residue Glu-165. Lys-173 and Asp-180 together coordinate deamido-NAD(+). Positions 189 and 211 each coordinate ATP. Position 260 to 261 (260 to 261) interacts with deamido-NAD(+); that stretch reads HK.

Belongs to the NAD synthetase family. Homodimer.

It catalyses the reaction deamido-NAD(+) + NH4(+) + ATP = AMP + diphosphate + NAD(+) + H(+). It participates in cofactor biosynthesis; NAD(+) biosynthesis; NAD(+) from deamido-NAD(+) (ammonia route): step 1/1. Its function is as follows. Catalyzes the ATP-dependent amidation of deamido-NAD to form NAD. Uses ammonia as a nitrogen source. This chain is NH(3)-dependent NAD(+) synthetase, found in Escherichia coli O6:K15:H31 (strain 536 / UPEC).